The following is a 215-amino-acid chain: uncharacterized protein (215 aa).

Helical transmembrane passes span 40–60 and 72–92; these read VLFPIPVFCSIKVLLDYFCSL and LIWFYVLSVILCKSLFAVGYL.

Its subcellular location is the mitochondrion membrane. This is an uncharacterized protein from Arabidopsis thaliana (Mouse-ear cress).